The following is a 227-amino-acid chain: Large ribosomal subunit protein bL25 (227 aa).

The interval 199–227 (AIAEAQSAEAAEEKAEESAEDEKKDGEEA) is disordered. Basic and acidic residues predominate over residues 209 to 227 (AEEKAEESAEDEKKDGEEA).

This sequence belongs to the bacterial ribosomal protein bL25 family. CTC subfamily. Part of the 50S ribosomal subunit; part of the 5S rRNA/L5/L18/L25 subcomplex. Contacts the 5S rRNA. Binds to the 5S rRNA independently of L5 and L18.

Functionally, this is one of the proteins that binds to the 5S RNA in the ribosome where it forms part of the central protuberance. This chain is Large ribosomal subunit protein bL25, found in Methylobacterium radiotolerans (strain ATCC 27329 / DSM 1819 / JCM 2831 / NBRC 15690 / NCIMB 10815 / 0-1).